The following is a 280-amino-acid chain: Putative protein-tyrosine sulfotransferase (280 aa).

A 3'-phosphoadenylyl sulfate-binding site is contributed by 16-20 (RSGTT). A disulfide bridge links cysteine 34 with cysteine 89. Catalysis depends on glutamate 37, which acts as the Proton donor/acceptor. The N-linked (GlcNAc...) asparagine glycan is linked to asparagine 57. 3 residues coordinate 3'-phosphoadenylyl sulfate: arginine 116, serine 124, and arginine 128. A glycan (N-linked (GlcNAc...) asparagine) is linked at asparagine 136. An intrachain disulfide couples cysteine 158 to cysteine 165. Residues tyrosine 170 and 215 to 224 (SASQVKNSIN) contribute to the 3'-phosphoadenylyl sulfate site.

It belongs to the protein sulfotransferase family.

The catalysed reaction is L-tyrosyl-[protein] + 3'-phosphoadenylyl sulfate = O-sulfo-L-tyrosine-[protein] + adenosine 3',5'-bisphosphate + H(+). Catalyzes the O-sulfation of tyrosine residues within acidic motifs of polypeptides, using 3'-phosphoadenylyl sulfate (PAPS) as cosubstrate. The chain is Putative protein-tyrosine sulfotransferase from Caenorhabditis briggsae.